We begin with the raw amino-acid sequence, 118 residues long: Membrane-anchored ubiquitin-fold protein 3 (118 aa).

The 67-residue stretch at 7 to 73 (IDIKFRLYDG…LENNKTVGQC (67 aa)) folds into the Ubiquitin-like domain. A lipid anchor (S-palmitoyl cysteine) is attached at C113. The residue at position 115 (C115) is a Cysteine methyl ester. C115 carries S-geranylgeranyl cysteine lipidation. A propeptide spans 116–118 (TIL) (removed in mature form).

As to expression, ubiquitous, but three fold higher expression in senescing leaves.

It localises to the cell membrane. Its function is as follows. May serve as docking site to facilitate the association of other proteins to the plasma membrane. The chain is Membrane-anchored ubiquitin-fold protein 3 (MUB3) from Arabidopsis thaliana (Mouse-ear cress).